Consider the following 478-residue polypeptide: Nuclear distribution protein PAC1 (478 aa).

Residues 9–41 enclose the LisH domain; sequence QAEELHKAMIAYLLSANLPKSAAALREELADSV. Residues 60 to 87 adopt a coiled-coil conformation; the sequence is TSVVRLQKKIMDLESRNNALQSELDSAT. 8 WD repeats span residues 113–154, 156–196, 200–247, 250–289, 292–352, 354–393, 398–439, and 440–477; these read SHRE…RTIK, HTKA…KNIR, GHDH…CVKT, GHVDWVRDVVASPDGRFLFSAGNDQVARLWDVSSGETKST, GHEH…IKTL, GHDNWVRALAFHPGGKYLLSVSDDKTLRCWDLTQECKCVR, AHGH…GASA, and INGVVPTGKKEDPGGGPMMGIRCVIATGSVDLKVRVFA.

It belongs to the WD repeat LIS1/nudF family. As to quaternary structure, self-associates. Interacts with NDL1 and dynein.

It localises to the cytoplasm. The protein resides in the cytoskeleton. It is found in the spindle pole. Its function is as follows. Positively regulates the activity of the minus-end directed microtubule motor protein dynein. May enhance dynein-mediated microtubule sliding by targeting dynein to the microtubule plus end. Required for nuclear migration during vegetative growth as well as development. Required for retrograde early endosome (EE) transport from the hyphal tip. Required for localization of dynein to the mitotic spindle poles. Recruits additional proteins to the dynein complex at SPBs. The chain is Nuclear distribution protein PAC1 from Paracoccidioides brasiliensis (strain Pb03).